The sequence spans 219 residues: Elongation factor Ts (219 aa).

Positions threonine 82–valine 85 are involved in Mg(2+) ion dislocation from EF-Tu.

It belongs to the EF-Ts family.

It localises to the cytoplasm. In terms of biological role, associates with the EF-Tu.GDP complex and induces the exchange of GDP to GTP. It remains bound to the aminoacyl-tRNA.EF-Tu.GTP complex up to the GTP hydrolysis stage on the ribosome. The sequence is that of Elongation factor Ts from Anaeromyxobacter dehalogenans (strain 2CP-C).